A 164-amino-acid chain; its full sequence is Transcriptional regulator MraZ (164 aa).

2 consecutive SpoVT-AbrB domains span residues 7–60 and 83–126; these read HYTN…EIDG and SEIL…EPGR. The disordered stretch occupies residues 144-164; that stretch reads QLSARHAAPDAPPLRSHGARE.

It belongs to the MraZ family. In terms of assembly, forms oligomers.

It is found in the cytoplasm. Its subcellular location is the nucleoid. This Methylocella silvestris (strain DSM 15510 / CIP 108128 / LMG 27833 / NCIMB 13906 / BL2) protein is Transcriptional regulator MraZ.